The chain runs to 97 residues: Putative membrane protein insertion efficiency factor (97 aa).

The protein belongs to the UPF0161 family.

It localises to the cell membrane. Functionally, could be involved in insertion of integral membrane proteins into the membrane. This Lactobacillus gasseri (strain ATCC 33323 / DSM 20243 / BCRC 14619 / CIP 102991 / JCM 1131 / KCTC 3163 / NCIMB 11718 / NCTC 13722 / AM63) protein is Putative membrane protein insertion efficiency factor.